We begin with the raw amino-acid sequence, 515 residues long: Maturase K (515 aa).

This sequence belongs to the intron maturase 2 family. MatK subfamily.

It localises to the plastid. Its subcellular location is the chloroplast. Usually encoded in the trnK tRNA gene intron. Probably assists in splicing its own and other chloroplast group II introns. This Alpinia zerumbet (Shell ginger) protein is Maturase K.